We begin with the raw amino-acid sequence, 267 residues long: tRNA pseudouridine synthase A (267 aa).

Residue D52 is the Nucleophile of the active site. Y113 contacts substrate.

This sequence belongs to the tRNA pseudouridine synthase TruA family. As to quaternary structure, homodimer.

The catalysed reaction is uridine(38/39/40) in tRNA = pseudouridine(38/39/40) in tRNA. In terms of biological role, formation of pseudouridine at positions 38, 39 and 40 in the anticodon stem and loop of transfer RNAs. This chain is tRNA pseudouridine synthase A, found in Chlamydia pneumoniae (Chlamydophila pneumoniae).